The chain runs to 507 residues: ATP synthase subunit alpha, chloroplastic (507 aa).

Residue 170–177 (GDRQTGKT) participates in ATP binding.

Belongs to the ATPase alpha/beta chains family. F-type ATPases have 2 components, CF(1) - the catalytic core - and CF(0) - the membrane proton channel. CF(1) has five subunits: alpha(3), beta(3), gamma(1), delta(1), epsilon(1). CF(0) has four main subunits: a, b, b' and c.

Its subcellular location is the plastid. It is found in the chloroplast thylakoid membrane. It carries out the reaction ATP + H2O + 4 H(+)(in) = ADP + phosphate + 5 H(+)(out). Functionally, produces ATP from ADP in the presence of a proton gradient across the membrane. The alpha chain is a regulatory subunit. The chain is ATP synthase subunit alpha, chloroplastic from Ranunculus macranthus (Large buttercup).